The chain runs to 401 residues: Formate-dependent phosphoribosylglycinamide formyltransferase (401 aa).

Residues 27-28 (EL) and Glu-87 contribute to the N(1)-(5-phospho-beta-D-ribosyl)glycinamide site. ATP-binding positions include Arg-119, Lys-160, 165-170 (SSGKGQ), 200-203 (EELV), and Glu-208. The ATP-grasp domain maps to 124–313 (EFAAEEVGVT…QFDLHLRAIL (190 aa)). Residues Glu-272 and Glu-284 each coordinate Mg(2+). Residues Asp-291, Lys-361, and 368-369 (RR) each bind N(1)-(5-phospho-beta-D-ribosyl)glycinamide.

This sequence belongs to the PurK/PurT family. As to quaternary structure, homodimer.

The enzyme catalyses N(1)-(5-phospho-beta-D-ribosyl)glycinamide + formate + ATP = N(2)-formyl-N(1)-(5-phospho-beta-D-ribosyl)glycinamide + ADP + phosphate + H(+). The protein operates within purine metabolism; IMP biosynthesis via de novo pathway; N(2)-formyl-N(1)-(5-phospho-D-ribosyl)glycinamide from N(1)-(5-phospho-D-ribosyl)glycinamide (formate route): step 1/1. In terms of biological role, involved in the de novo purine biosynthesis. Catalyzes the transfer of formate to 5-phospho-ribosyl-glycinamide (GAR), producing 5-phospho-ribosyl-N-formylglycinamide (FGAR). Formate is provided by PurU via hydrolysis of 10-formyl-tetrahydrofolate. In Haloquadratum walsbyi (strain DSM 16790 / HBSQ001), this protein is Formate-dependent phosphoribosylglycinamide formyltransferase.